The chain runs to 121 residues: Large ribosomal subunit protein bL12 (121 aa).

It belongs to the bacterial ribosomal protein bL12 family. In terms of assembly, homodimer. Part of the ribosomal stalk of the 50S ribosomal subunit. Forms a multimeric L10(L12)X complex, where L10 forms an elongated spine to which 2 to 4 L12 dimers bind in a sequential fashion. Binds GTP-bound translation factors.

Forms part of the ribosomal stalk which helps the ribosome interact with GTP-bound translation factors. Is thus essential for accurate translation. This Xanthomonas campestris pv. campestris (strain B100) protein is Large ribosomal subunit protein bL12.